A 483-amino-acid chain; its full sequence is Cobyric acid synthase (483 aa).

Residues 252-439 enclose the GATase cobBQ-type domain; it reads KLKVVVPVLT…LHGFLDSEAV (188 aa). The Nucleophile role is filled by Cys333. His431 is a catalytic residue.

The protein belongs to the CobB/CobQ family. CobQ subfamily.

It participates in cofactor biosynthesis; adenosylcobalamin biosynthesis. Functionally, catalyzes amidations at positions B, D, E, and G on adenosylcobyrinic A,C-diamide. NH(2) groups are provided by glutamine, and one molecule of ATP is hydrogenolyzed for each amidation. This is Cobyric acid synthase from Vibrio vulnificus (strain CMCP6).